A 391-amino-acid polypeptide reads, in one-letter code: Formate-dependent phosphoribosylglycinamide formyltransferase (391 aa).

N(1)-(5-phospho-beta-D-ribosyl)glycinamide is bound by residues 20–21 and E80; that span reads EL. ATP contacts are provided by residues R112, K153, 158–163, 193–196, and E201; these read SSGKGQ and EGFI. In terms of domain architecture, ATP-grasp spans 117 to 306; sequence RLAAEELGLT…EFALHVRAFT (190 aa). E265 and E277 together coordinate Mg(2+). N(1)-(5-phospho-beta-D-ribosyl)glycinamide-binding positions include D284, K354, and 361–362; that span reads RR.

The protein belongs to the PurK/PurT family. As to quaternary structure, homodimer.

The enzyme catalyses N(1)-(5-phospho-beta-D-ribosyl)glycinamide + formate + ATP = N(2)-formyl-N(1)-(5-phospho-beta-D-ribosyl)glycinamide + ADP + phosphate + H(+). It participates in purine metabolism; IMP biosynthesis via de novo pathway; N(2)-formyl-N(1)-(5-phospho-D-ribosyl)glycinamide from N(1)-(5-phospho-D-ribosyl)glycinamide (formate route): step 1/1. In terms of biological role, involved in the de novo purine biosynthesis. Catalyzes the transfer of formate to 5-phospho-ribosyl-glycinamide (GAR), producing 5-phospho-ribosyl-N-formylglycinamide (FGAR). Formate is provided by PurU via hydrolysis of 10-formyl-tetrahydrofolate. This chain is Formate-dependent phosphoribosylglycinamide formyltransferase, found in Vibrio vulnificus (strain CMCP6).